The following is an 815-amino-acid chain: Serotype-specific mannosyltransferase WbdA (815 aa).

The tract at residues 1–374 (MSRAIIENAG…WANTAHLAID (374 aa)) is alpha-(1-&gt;2)-mannosyltransferase. Residues 431–804 (KLLVDISVLA…WKQSAELLLK (374 aa)) form an alpha-(1-&gt;3)-mannosyltransferase region.

This sequence belongs to the glycosyltransferase group 1 family. Glycosyltransferase 4 subfamily.

It is found in the cell inner membrane. It functions in the pathway bacterial outer membrane biogenesis; LPS O-antigen biosynthesis. Its function is as follows. Mannosyltransferase involved in the biosynthesis of the repeat unit of the lipopolysaccharide (LPS) O-antigen region. The protein is Serotype-specific mannosyltransferase WbdA of Escherichia coli.